Reading from the N-terminus, the 254-residue chain is Chaperone protein PmfD (254 aa).

The first 26 residues, 1–26 (MNSFSTLKTLFCGSLLALSLVNTTQA), serve as a signal peptide directing secretion.

The protein belongs to the periplasmic pilus chaperone family.

The protein localises to the periplasm. Involved in the biogenesis of the PMF fimbria. This is Chaperone protein PmfD (pmfD) from Proteus mirabilis (strain HI4320).